Consider the following 677-residue polypeptide: Fermitin family homolog 1 (677 aa).

One can recognise an FERM domain in the interval 96–653 (MLRLRLPNLK…HEYIGGYIFL (558 aa)). Ser170, Ser179, and Ser361 each carry phosphoserine. Residues 337-433 (ESEVDEIEAA…EVVPNVNVAE (97 aa)) enclose the PH domain.

The protein belongs to the kindlin family. Interacts with the cytoplasmic domain of integrins ITGB1 and ITGB3.

It is found in the cytoplasm. Its subcellular location is the cytoskeleton. The protein resides in the cell junction. The protein localises to the focal adhesion. It localises to the cell projection. It is found in the ruffle membrane. Its function is as follows. Involved in cell adhesion. Contributes to integrin activation. When coexpressed with talin, potentiates activation of ITGA2B. Required for normal keratinocyte proliferation. Required for normal polarization of basal keratinocytes in skin, and for normal cell shape. Required for normal adhesion of keratinocytes to fibronectin and laminin, and for normal keratinocyte migration to wound sites. The chain is Fermitin family homolog 1 (FERMT1) from Pongo abelii (Sumatran orangutan).